Reading from the N-terminus, the 179-residue chain is MPSWKELVLVKGHPMQRIYIEKVVVNIGVGASGEKLEKAAGLLKELTGAEPSRRRAKKSIKDFGIRKGEPIGVAVTLRRDQAVNFLMRALQAVNNRVKKTSFDDRGNVCFGIKEHILLPGVKYDPAVGIWGMDVCVKLAKPGLRVQLRRRRRSKVGKRQLVTKEEAIEFFQKVLGVQVD.

The protein belongs to the universal ribosomal protein uL5 family. Part of the 50S ribosomal subunit; contacts the 5S rRNA and probably tRNA. Forms a bridge to the 30S subunit in the 70S ribosome.

Its function is as follows. This is one of the proteins that bind and probably mediate the attachment of the 5S RNA into the large ribosomal subunit, where it forms part of the central protuberance. In the 70S ribosome it contacts protein S13 of the 30S subunit (bridge B1b), connecting the 2 subunits; this bridge is implicated in subunit movement. May contact the P site tRNA; the 5S rRNA and some of its associated proteins might help stabilize positioning of ribosome-bound tRNAs. This chain is Large ribosomal subunit protein uL5, found in Pyrobaculum aerophilum (strain ATCC 51768 / DSM 7523 / JCM 9630 / CIP 104966 / NBRC 100827 / IM2).